The following is a 296-amino-acid chain: QAAPDEGRASGHKLTVYWGAEDDTTTLDDVCNDSSYDVVNLAFLSHFFSAGGYPKMSIGNLDGPSQAQKKAGATGLQDGSSLVKSIKNCQSKGKPVILSMGGATDYSDVQLNSDAQGQQIANTVWNLFLGGTDHKELRPFGDVKLDGVDLDNETNDGTGYLAMTKQFKANFQKDTSKKYYITAAPQCPYPDQSEPLDVCQLLDWVQVQFYNNGNCNIAQRGFAKAVKNWSKGIGSGVQLYIGALASGADGDEGYVHAATLNRAVNQVKAMNLPNFGGAMLWEAHSAVKNGQLPEED.

The GH18 domain maps to 12–296 (HKLTVYWGAE…VKNGQLPEED (285 aa)). Residues asparagine 32 and asparagine 152 are each glycosylated (N-linked (GlcNAc...) asparagine). Glutamate 153 (proton donor) is an active-site residue. Asparagine 228 carries an N-linked (GlcNAc...) asparagine glycan.

The protein belongs to the glycosyl hydrolase 18 family. Chitinase class III subfamily.

Its subcellular location is the secreted. The enzyme catalyses Random endo-hydrolysis of N-acetyl-beta-D-glucosaminide (1-&gt;4)-beta-linkages in chitin and chitodextrins.. In terms of biological role, secreted chitinase involved in the degradation of chitin, a component of the cell walls of fungi and exoskeletal elements of some animals (including worms and arthropods). Participates in the infection process and directly acts in the penetration process of the host cuticle. Involved in heat-shock adaptation. In Metarhizium anisopliae (Entomophthora anisopliae), this protein is Endochitinase 3 (chi3).